Consider the following 360-residue polypeptide: MKASLLNKLDILQDRFEELTALLGDAEVISDQTRFRAYSREYAEVEPVYAAYKEWCKVQGDLEGAQALLKDSDPDLREMAVEEVREAKEQLLTLESQLQRMLLPKDPNDGRNVFLEIRAGTGGDEAAIFSGDLFRMYSRYAEKRGWRLEILSENEGEHGGYKEIIARVEGENVYGKLKFESGAHRVQRVPETESQGRVHTSACTVAVLPEPDEQAAIEINPADLRVDTYRASGAGGQHVNKTDSAIRITHLPTGIVVECQEERSQHKNRARAMSWLSAKLNDMQTSAAQNAIASERKLLVGSGDRSERIRTYNYPQGRVTDHRINLTLYSLDDILSGGVEAVIEPLLAEYQADQLAALGD.

N5-methylglutamine is present on Gln-237.

This sequence belongs to the prokaryotic/mitochondrial release factor family. Methylated by PrmC. Methylation increases the termination efficiency of RF1.

The protein localises to the cytoplasm. Peptide chain release factor 1 directs the termination of translation in response to the peptide chain termination codons UAG and UAA. The chain is Peptide chain release factor 1 from Pseudomonas putida (strain GB-1).